We begin with the raw amino-acid sequence, 103 residues long: Large ribosomal subunit protein bL21 (103 aa).

The protein belongs to the bacterial ribosomal protein bL21 family. In terms of assembly, part of the 50S ribosomal subunit. Contacts protein L20.

Functionally, this protein binds to 23S rRNA in the presence of protein L20. The polypeptide is Large ribosomal subunit protein bL21 (Psychromonas ingrahamii (strain DSM 17664 / CCUG 51855 / 37)).